A 195-amino-acid chain; its full sequence is Coagulogen (195 aa).

Residues 1–20 form the signal peptide; that stretch reads MEKKLLGIAILFVTVVSVLA. Cystine bridges form between C28–C188, C30–C115, C80–C182, C85–C141, C95–C189, C108–C161, C147–C191, and C155–C193.

Belongs to the coagulin family. Coagulogen is cleaved after Arg-38 and Arg-66 by a clotting enzyme contained in the hemocyte and activated by a bacterial endotoxin (lipopolysaccharide). This cleavage releases the peptide C and leaves 2 chains of coagulin, A and B, linked by two disulfide bonds. Coagulin molecules interlink to form a gel. As to expression, hemolymph.

The protein localises to the secreted. Coagulogen is a gel-forming protein of hemolymph; it hinders the spread of invaders by immobilizing them. The sequence is that of Coagulogen from Limulus polyphemus (Atlantic horseshoe crab).